Here is a 657-residue protein sequence, read N- to C-terminus: Splicing factor Cactin (657 aa).

The segment covering 1-15 has biased composition (basic residues); the sequence is MGKDSKKHKKERRRE. 3 disordered regions span residues 1–83, 369–406, and 472–503; these read MGKD…EDTL, QESE…ISKK, and ADVD…QGAS. 2 coiled-coil regions span residues 23–77 and 352–403; these read SDEE…RKDA and RLQL…DEKI. A compositionally biased stretch (basic and acidic residues) spans 26 to 60; the sequence is ERLQKRLAEQRSLKKDEKRRQKEEMKKNESAEEKR. Residues 61-72 show a composition bias toward basic residues; it reads ARRMEKKMRKDA. The segment covering 389-401 has biased composition (acidic residues); it reads EEEEEEEEDEDDE. Positions 489 to 503 are enriched in low complexity; it reads PSSSAASSGAPQGAS.

The protein belongs to the CACTIN family. In terms of tissue distribution, expressed in pharynx, intestine, vulva and spermatheca (at protein level).

The protein localises to the nucleus. It localises to the cytoplasm. Its function is as follows. Plays a role in pre-mRNA splicing by facilitating excision of a subset of introns. Plays a role during early embryonic development. Required for the distal tip cell migration at the end of larval development and for gonad morphogenesis. This Caenorhabditis elegans protein is Splicing factor Cactin (cacn-1).